A 1792-amino-acid polypeptide reads, in one-letter code: MARCGEGSAAPMVLLGSAGVCSKGLQRKGPCERRRLKATVSEQLSQDLLRLLREEFHTDVTFSVGCTLFKAHKAVLLARVPDFYFHTIGQTSNSLTNQEPIAVENVEALEFRTFLQIIYSSNRNIKNYEEEILRKKIMEIGISQKQLDISFPKCENSSDCSLQKHEIPEDISDRDDDFISNDNYDLEPASELGEDLLKLYVKPCCPDIDIFVDGKRFKAHRAILSARSSYFAAMLSGCWAESSQEYVTLQGISHVELNVMMHFIYGGTLDIPDKTNVGQILNMADMYGLEGLKEVAIYILRRDYCNFFQKPVPRTLTSILECLIIAHSVGVESLFADCMKWIVKHFARFWSERSFANIPPEIQKSCLNMLIQSLNDKNAAFLLMESDRLIISLPRVKWTEAALTMASQLQEKCIAFIVDNFSKIIQSENFALLLQSQAMSSTADLLDTILKAIEENITTENSCSLLMALDTLLNSDSTKEMGFTCKIQALRDKLWIFLVQSFYAVRHTESWKLMSTDDQQKIQAAAFDKGDDRRLGKKPIFSSSQQRKQVSDSGDIKIKSWRGNNKKECWSYLSTNKKMKSDGLGASGHSSSTNRNSINKTLKQDDVKEKDGTKIASKITKELKTGGKNVSGKPKTVTKSKTENGDKARLENMSPRQVVERSATAAAAATGQKNLLNGKGVRNQEGQISGARPKVLTGNLNVQAKAKPLKKATGKDSPCLSIAGPSSRSTDSSMEFSISTECLDEPKENGSTEEEKPSGHKLSFCDSPGQMMKNSVDSVKNSTVAIKSRPVSRVTNGTSNKKSIHEQDTNVNNSVLKKVSGKGCSEPVPQAILKKRGTSNGCTAAQQRTKSTPSNLTKTQGSQGESPNSVKSSVSSRQSDENVAKLDHNTTTEKQAPKRKMVKQVHTALPKVNAKIVAMPKNLNQSKKGETLNNKDSKQKMPPGQVISKTQPSSQRPLKHETSTVQKSMFHDVRDNNNKDSVSEQKPHKPLINLASEISDAEALQSSCRPDPQKPLNDQEKEKLALECQNISKLDKSLKHELESKQICLDKSETKFPNHKETDDCDAANICCHSVGSDNVNSKFYSTTALKYMVSNPNENSLNSNPVCDLDSTSAGQIHLISDRENQVGRKDTNKQSSIKCVEDVSLCNPERTNGTLNSAQEDKKSKVPVEGLTIPSKLSDESAMDEDKHATADSDVSSKCFSGQLSEKNSPKNMETSESPESHETPETPFVGHWNLSTGVLHQRESPESDTGSATTSSDDIKPRSEDYDAGGSQDDDGSNDRGISKCGTMLCHDFLGRSSSDTSTPEELKIYDSNLRIEVKMKKQSNNDLFQVNSTSDDEIPRKRPEIWSRSAIVHSRERENIPRGSVQFAQEIDQVSSSADETEDERSEAENVAENFSISNPAPQQFQGIINLAFEDATENECREFSATKKFKRSVLLSVDECEELGSDEGEVHTPFQASVDSFSPSDVFDGISHEHHGRTCYSRFSRESEDNILECKQNKGNSVCKNESTVLDLSSIDSSRKNKQSVSATEKKNTIDVLSSRSRQLLREDKKVNNGSNVENDIQQRSKFLDSDVKSQERPCHLDLHQREPNSDIPKNSSTKSLDSFRSQVLPQEGPVKESHSTTTEKANIALSAGDIDDCDTLAQTRMYDHRPSKTLSPIYEMDVIEAFEQKVESETHVTDMDFEDDQHFAKQDWTLLKQLLSEQDSNLDVTNSVPEDLSLAQYLINQTLLLARDSSKPQGITHIDTLNRWSELTSPLDSSASITMASFSSEDCSPQGEWTILELETQH.

2 BTB domains span residues 58-127 (TDVT…NIKN) and 206-273 (PDID…DIPD). Disordered stretches follow at residues 528 to 554 (DKGD…SDSG), 581 to 658 (SDGL…PRQV), 670 to 692 (TGQK…SGAR), 707 to 768 (KPLK…CDSP), 788 to 815 (SRPV…NNSV), 831 to 989 (AILK…KPHK), 1151 to 1283 (ERTN…SNDR), and 1519 to 1607 (SIDS…KSLD). 2 stretches are compositionally biased toward polar residues: residues 541 to 552 (FSSSQQRKQVSD) and 588 to 601 (GHSS…INKT). Basic and acidic residues-rich tracts occupy residues 602 to 625 (LKQD…ELKT) and 640 to 650 (SKTENGDKARL). Residues 724–740 (GPSSRSTDSSMEFSIST) show a composition bias toward polar residues. Over residues 744–758 (DEPKENGSTEEEKPS) the composition is skewed to basic and acidic residues. Positions 838 to 865 (TSNGCTAAQQRTKSTPSNLTKTQGSQGE) are enriched in polar residues. The segment covering 866 to 877 (SPNSVKSSVSSR) has biased composition (low complexity). 2 stretches are compositionally biased toward basic and acidic residues: residues 878–891 (QSDE…HNTT) and 927–939 (KKGE…DSKQ). Residues 947–956 (ISKTQPSSQR) show a composition bias toward polar residues. The segment covering 969 to 987 (MFHDVRDNNNKDSVSEQKP) has biased composition (basic and acidic residues). Composition is skewed to polar residues over residues 1151-1160 (ERTNGTLNSA) and 1195-1215 (SDVS…PKNM). Positions 1250 to 1259 (SDTGSATTSS) are enriched in low complexity. Residues 1566–1594 (IQQRSKFLDSDVKSQERPCHLDLHQREPN) are compositionally biased toward basic and acidic residues. Residues 1597–1607 (IPKNSSTKSLD) are compositionally biased toward polar residues.

As to quaternary structure, interacts (via N-terminus) with adapter protein complex AP-2 subunits alpha (AP2A1) and beta (AP2B1). As to expression, highly expressed in fetal brain. Weakly expressed in adult brain and prostate.

The protein localises to the cell projection. The protein resides in the axon. Its subcellular location is the presynapse. It is found in the cytoplasmic vesicle. It localises to the clathrin-coated vesicle. The protein localises to the nucleus. Involved in clathrin-mediated endocytosis at the synapse. Plays a role in neuronal development and in synaptic vesicle recycling in mature neurons, a process required for normal synaptic transmission. The sequence is that of BTB/POZ domain-containing protein 8 from Homo sapiens (Human).